Reading from the N-terminus, the 210-residue chain is DNA-directed RNA polymerases I, II, and III subunit RPABC1 (210 aa).

Residue M1 is modified to N-acetylmethionine. Residue K81 forms a Glycyl lysine isopeptide (Lys-Gly) (interchain with G-Cter in SUMO2) linkage.

It belongs to the archaeal Rpo5/eukaryotic RPB5 RNA polymerase subunit family. Component of the RNA polymerase I (Pol I), RNA polymerase II (Pol II) and RNA polymerase III (Pol III) complexes consisting of at least 13, 12 and 17 subunits, respectively. Pol I complex consists of a ten-subunit catalytic core composed of POLR1A/RPA1, POLR1B/RPA2, POLR1C/RPAC1, POLR1D/RPAC2, POLR1H/RPA12, POLR2E/RPABC1, POLR2F/RPABC2, POLR2H/RPABC3, POLR2K/RPABC4 and POLR2L/RPABC5; a mobile stalk subunit POLR1F/RPA43 protruding from the core and additional subunits homologous to general transcription factors POLR1E/RPA49 and POLR1G/RPA34. Part of Pol I pre-initiation complex (PIC), in which Pol I core assembles with RRN3 and promoter-bound UTBF and SL1/TIF-IB complex. Pol II complex contains a ten-subunit catalytic core composed of POLR2A/RPB1, POLR2B/RPB2, POLR2C/RPB3, POLR2I/RPB9, POLR2J/RPB11, POLR2E/RPABC1, POLR2F/RPABC2, POLR2H/RPABC3, POLR2K/RPABC4 and POLR2L/RPABC5 and a mobile stalk composed of two subunits POLR2D/RPB4 and POLR2G/RPB7. Part of Pol II(G) complex, in which Pol II core associates with an additional subunit POLR2M; unlike conventional Pol II, Pol II(G) functions as a transcriptional repressor. Part of TBP-based Pol II pre-initiation complex (PIC), in which Pol II core assembles with general transcription factors and other specific initiation factors including GTF2E1, GTF2E2, GTF2F1, GTF2F2, TCEA1, ERCC2, ERCC3, GTF2H2, GTF2H3, GTF2H4, GTF2H5, GTF2A1, GTF2A2, GTF2B and TBP; this large multi-subunit PIC complex mediates DNA unwinding and targets Pol II core to the transcription start site where the first phosphodiester bond forms. In Pol II complex, this subunit is present in 2-fold molar excess over the other subunits. Pol III complex consists of a ten-subunit catalytic core composed of POLR3A/RPC1, POLR3B/RPC2, POLR1C/RPAC1, POLR1D/RPAC2, POLR3K/RPC10, POLR2E/RPABC1, POLR2F/RPABC2, POLR2H/RPABC3, POLR2K/RPABC4 and POLR2L/RPABC5; a mobile stalk composed of two subunits POLR3H/RPC8 and CRCP/RPC9, protruding from the core and functioning primarily in transcription initiation; and additional subunits homologous to general transcription factors of the RNA polymerase II machinery, POLR3C/RPC3-POLR3F/RPC6-POLR3G/RPC7 heterotrimer required for transcription initiation and POLR3D/RPC4-POLR3E/RPC5 heterodimer involved in both transcription initiation and termination. Component of the PAQosome complex which is responsible for the biogenesis of several protein complexes and which consists of R2TP complex members RUVBL1, RUVBL2, RPAP3 and PIH1D1, URI complex members PFDN2, PFDN6, PDRG1, UXT and URI1 as well as ASDURF, POLR2E and DNAAF10/WDR92. Interacts with URI1.

The protein localises to the nucleus. It is found in the nucleolus. Its function is as follows. DNA-dependent RNA polymerase catalyzes the transcription of DNA into RNA using the four ribonucleoside triphosphates as substrates. Common component of RNA polymerases I, II and III which synthesize ribosomal RNA precursors, mRNA precursors and many functional non-coding RNAs, and small RNAs, such as 5S rRNA and tRNAs, respectively. Pol II is the central component of the basal RNA polymerase II transcription machinery. Pols are composed of mobile elements that move relative to each other. In Pol II, POLR2E/RPABC1 is part of the lower jaw surrounding the central large cleft and thought to grab the incoming DNA template. Seems to be the major component in this process. This Mus musculus (Mouse) protein is DNA-directed RNA polymerases I, II, and III subunit RPABC1.